Here is a 417-residue protein sequence, read N- to C-terminus: Adenylosuccinate synthetase (417 aa).

Residues 11 to 17 (GDEGKGK) and 39 to 41 (GHT) contribute to the GTP site. Asp12 (proton acceptor) is an active-site residue. Mg(2+) is bound by residues Asp12 and Gly39. IMP is bound by residues 12–15 (DEGK), 37–40 (NAGH), Thr126, Arg140, Gln218, Thr233, and Arg295. Catalysis depends on His40, which acts as the Proton donor. 291-297 (TVSGRIR) contributes to the substrate binding site. GTP-binding positions include Arg297, 323–325 (KLD), and 406–408 (SNG).

This sequence belongs to the adenylosuccinate synthetase family. As to quaternary structure, homodimer. Mg(2+) serves as cofactor.

It is found in the cytoplasm. The enzyme catalyses IMP + L-aspartate + GTP = N(6)-(1,2-dicarboxyethyl)-AMP + GDP + phosphate + 2 H(+). It functions in the pathway purine metabolism; AMP biosynthesis via de novo pathway; AMP from IMP: step 1/2. In terms of biological role, plays an important role in the de novo pathway of purine nucleotide biosynthesis. Catalyzes the first committed step in the biosynthesis of AMP from IMP. The protein is Adenylosuccinate synthetase of Neorickettsia sennetsu (strain ATCC VR-367 / Miyayama) (Ehrlichia sennetsu).